The primary structure comprises 181 residues: Inner membrane-spanning protein YciB (181 aa).

The next 5 helical transmembrane spans lie at Leu-3–Tyr-23, Ser-54–Ile-74, Ile-81–Ile-101, Leu-119–Tyr-139, and Phe-149–Leu-169.

Belongs to the YciB family.

It localises to the cell inner membrane. Its function is as follows. Plays a role in cell envelope biogenesis, maintenance of cell envelope integrity and membrane homeostasis. The sequence is that of Inner membrane-spanning protein YciB from Legionella pneumophila subsp. pneumophila (strain Philadelphia 1 / ATCC 33152 / DSM 7513).